A 217-amino-acid polypeptide reads, in one-letter code: N-(5'-phosphoribosyl)anthranilate isomerase (217 aa).

The protein belongs to the TrpF family.

It carries out the reaction N-(5-phospho-beta-D-ribosyl)anthranilate = 1-(2-carboxyphenylamino)-1-deoxy-D-ribulose 5-phosphate. It functions in the pathway amino-acid biosynthesis; L-tryptophan biosynthesis; L-tryptophan from chorismate: step 3/5. The sequence is that of N-(5'-phosphoribosyl)anthranilate isomerase from Synechococcus sp. (strain ATCC 27144 / PCC 6301 / SAUG 1402/1) (Anacystis nidulans).